A 670-amino-acid chain; its full sequence is Outer dynein arm-docking complex subunit 1 (670 aa).

Coiled coils occupy residues 9–155, 183–224, and 302–381; these read SKEV…RYLN, AVRE…EQLH, and NFIN…IQLL. A disordered region spans residues 454–473; it reads KMAPLQPPDTLEDPPGFEAS. Phosphoserine is present on S517. Disordered regions lie at residues 526–596 and 616–670; these read AGSS…ASSG and VGSS…DSRG. Residues 584–596 show a composition bias toward polar residues; sequence GHVTFGSTSASSG. Over residues 650-670 the composition is skewed to low complexity; that stretch reads SSTGPASSTGPGSSTSKDSRG.

This sequence belongs to the ODA1/DCC2 family. In terms of assembly, component of the outer dynein arm-docking complex along with ODAD2, ODAD3, ODAD4 and CLXN. Interacts with ODAD3. Interacts with ODAD4; this interaction may facilitate the recruitment and/or attachment of outer dynein arm docking complex proteins, including ODAD1, ODAD3, and ODAD4 to ciliary axonemes. Interacts with DNAH9. Interacts with MNS1. Interacts with PIERCE1 and PIERCE2; the interactions link the outer dynein arms docking complex (ODA-DC) to the internal microtubule inner proteins (MIP) in cilium axoneme. As to expression, expressed in nasal epithelial cells. Highly expressed in testis and also detected in lung, brain and kidney.

The protein resides in the cytoplasm. Its subcellular location is the cytoskeleton. It is found in the cilium axoneme. Its function is as follows. Component of the outer dynein arm-docking complex (ODA-DC) that mediates outer dynein arms (ODA) binding onto the doublet microtubule. Involved in mediating assembly of both ODAs and their axonemal docking complex onto ciliary microtubules. The sequence is that of Outer dynein arm-docking complex subunit 1 from Homo sapiens (Human).